The chain runs to 325 residues: MEIFDYDNILLLPRKCRVESRSECDTSVELGGRRFRLPVVPANMKTVVDEKICTWLAQNGYFYVMHRFDLDNVQFVKDMHAQGCFASISLGVKQPDYDTVDRFVAEGICPEYITIDIAHGHADSVKNMITYLKAKIPAAFVIAGNVGTPEAVIDLENWGADATKVGIGPGKVCITKLKTGFGTGGWQLSALKWCARVATKPIIADGGIRSHGDIAKSVRFGATMVMVGSLFAGHEESPGKTVEVDGELYKEYYGSASDFNKGEYKHVEGKRILEPIKGKLADTLTEMEQDIQSSISYSGGKKLMDIRKVNYVILGGDNAGEHLLM.

Catalysis depends on Cys173, which acts as the Thioimidate intermediate. Residue 202 to 225 coordinates NADP(+); sequence IIADGGIRSHGDIAKSVRFGATMV.

Belongs to the IMPDH/GMPR family. GuaC type 2 subfamily.

The enzyme catalyses IMP + NH4(+) + NADP(+) = GMP + NADPH + 2 H(+). In terms of biological role, catalyzes the irreversible NADPH-dependent deamination of GMP to IMP. It functions in the conversion of nucleobase, nucleoside and nucleotide derivatives of G to A nucleotides, and in maintaining the intracellular balance of A and G nucleotides. This is GMP reductase from Acidovorax ebreus (strain TPSY) (Diaphorobacter sp. (strain TPSY)).